A 428-amino-acid chain; its full sequence is Putative UDP-glucose 6-dehydrogenase YtcA (428 aa).

The N-terminal stretch at 1–23 is a signal peptide; sequence MKICVVGAGYVGLTLSAALASIG. NAD(+) is bound by residues 2 to 19, valine 11, aspartate 30, lysine 35, threonine 118, and glutamate 152; that span reads KICV…SAAL. Substrate-binding positions include 148-152, lysine 203, asparagine 207, 248-252, and glycine 256; these read EFLRE and FLQAG. Cysteine 259 (nucleophile) is an active-site residue. Lysine 262 contacts NAD(+). Lysine 319 lines the substrate pocket. Arginine 326 contributes to the NAD(+) binding site.

It belongs to the UDP-glucose/GDP-mannose dehydrogenase family.

The enzyme catalyses UDP-alpha-D-glucose + 2 NAD(+) + H2O = UDP-alpha-D-glucuronate + 2 NADH + 3 H(+). It participates in nucleotide-sugar biosynthesis; UDP-alpha-D-glucuronate biosynthesis; UDP-alpha-D-glucuronate from UDP-alpha-D-glucose: step 1/1. Functionally, catalyzes the conversion of UDP-glucose into UDP-glucuronate, one of the precursors of teichuronic acid. This chain is Putative UDP-glucose 6-dehydrogenase YtcA (ytcA), found in Bacillus subtilis (strain 168).